Here is a 510-residue protein sequence, read N- to C-terminus: Lysine--tRNA ligase (510 aa).

Mg(2+)-binding residues include E420 and E427.

This sequence belongs to the class-II aminoacyl-tRNA synthetase family. In terms of assembly, homodimer. The cofactor is Mg(2+).

The protein resides in the cytoplasm. The enzyme catalyses tRNA(Lys) + L-lysine + ATP = L-lysyl-tRNA(Lys) + AMP + diphosphate. The chain is Lysine--tRNA ligase from Vibrio campbellii (strain ATCC BAA-1116).